A 493-amino-acid chain; its full sequence is Cytoplasmic tRNA 2-thiolation protein 2 (493 aa).

Ser-489 carries the phosphoserine modification.

Belongs to the CTU2/NCS2 family. As to quaternary structure, interacts with NCS6 and URM1. May act by forming a heterodimer with NCS6.

Its subcellular location is the cytoplasm. Its pathway is tRNA modification; 5-methoxycarbonylmethyl-2-thiouridine-tRNA biosynthesis. In terms of biological role, plays a central role in 2-thiolation of mcm(5)S(2)U at tRNA wobble positions of tRNA(Lys), tRNA(Glu) and tRNA(Gln). May act by forming a heterodimer with NCS6 that ligates sulfur from thiocarboxylated URM1 onto the uridine of tRNAs at wobble position. Prior mcm(5) tRNA modification by the elongator complex is required for 2-thiolation. May also be involved in protein urmylation. This chain is Cytoplasmic tRNA 2-thiolation protein 2, found in Saccharomyces cerevisiae (strain RM11-1a) (Baker's yeast).